We begin with the raw amino-acid sequence, 697 residues long: Long-chain-fatty-acid--CoA ligase 6 (697 aa).

Residues 25 to 45 (LSATTLVSMGALAAILAYWFT) form a helical; Signal-anchor for type III membrane protein membrane-spanning segment. Residues 46-697 (HRPKALQPPC…QIEELYSISM (652 aa)) are Cytoplasmic-facing.

It belongs to the ATP-dependent AMP-binding enzyme family. It depends on Mg(2+) as a cofactor. As to expression, expressed predominantly in erythrocyte precursors, in particular in reticulocytes, fetal blood cells derived from fetal liver, hemopoietic stem cells from cord blood, bone marrow and brain.

It localises to the mitochondrion outer membrane. It is found in the peroxisome membrane. The protein localises to the microsome membrane. The protein resides in the endoplasmic reticulum membrane. It catalyses the reaction a long-chain fatty acid + ATP + CoA = a long-chain fatty acyl-CoA + AMP + diphosphate. The enzyme catalyses (5Z,8Z,11Z,14Z)-eicosatetraenoate + ATP + CoA = (5Z,8Z,11Z,14Z)-eicosatetraenoyl-CoA + AMP + diphosphate. It carries out the reaction hexadecanoate + ATP + CoA = hexadecanoyl-CoA + AMP + diphosphate. The catalysed reaction is (E)-hexadec-2-enoate + ATP + CoA = (2E)-hexadecenoyl-CoA + AMP + diphosphate. It catalyses the reaction 15-hydroxy-(5Z,8Z,11Z,13E)-eicosatetraenoate + ATP + CoA = 15-hydroxy-(5Z,8Z,11Z,13E)-eicosatetraenoyl-CoA + AMP + diphosphate. The enzyme catalyses 12-hydroxy-(5Z,8Z,10E,14Z)-eicosatetraenoate + ATP + CoA = 12-hydroxy-(5Z,8Z,10E,14Z)-eicosatetraenoyl-CoA + AMP + diphosphate. It carries out the reaction 5-hydroxy-(6E,8Z,11Z,14Z)-eicosatetraenoate + ATP + CoA = 5-hydroxy-(6E,8Z,11Z,14Z)-eicosatetraenoyl-CoA + AMP + diphosphate. Functionally, catalyzes the conversion of long-chain fatty acids to their active form acyl-CoA for both synthesis of cellular lipids, and degradation via beta-oxidation. Plays an important role in fatty acid metabolism in brain and the acyl-CoAs produced may be utilized exclusively for the synthesis of the brain lipid. The chain is Long-chain-fatty-acid--CoA ligase 6 from Homo sapiens (Human).